The following is a 137-amino-acid chain: Large ribosomal subunit protein uL16 (137 aa).

The protein belongs to the universal ribosomal protein uL16 family. In terms of assembly, part of the 50S ribosomal subunit.

Functionally, binds 23S rRNA and is also seen to make contacts with the A and possibly P site tRNAs. The polypeptide is Large ribosomal subunit protein uL16 (Brucella abortus (strain S19)).